Here is a 236-residue protein sequence, read N- to C-terminus: H2HPP isomerase (236 aa).

Cupin type-1 domains lie at Tyr40–Ile106 and Asn151–Val215. 8 residues coordinate a divalent metal cation: His50, His52, Gln56, His91, His162, His164, Gln168, and His202. Position 223 (Tyr223) interacts with substrate.

Monomer. Requires Fe(2+) as cofactor. It depends on Co(2+) as a cofactor.

Its subcellular location is the cytoplasm. It carries out the reaction 3-[(4R)-4-hydroxycyclohexa-1,5-dien-1-yl]-2-oxopropanoate = 3-[(1E,4R)-4-hydroxycyclohex-2-en-1-ylidene]pyruvate. It participates in antibiotic biosynthesis; bacilysin biosynthesis. Part of the bacABCDEF operon responsible for the biosynthesis of the nonribosomally synthesized dipeptide antibiotic bacilysin, composed of L-alanine and L-anticapsin. Bacilysin is an irreversible inactivator of the glutaminase domain of glucosamine synthetase. BacB catalyzes the allylic isomerization of the endocyclic-delta(4),delta(8)-7R-dihydro-hydroxyphenylpyruvate (en-H2HPP) to generate a mixture of 3E,7R- and 3Z, 7R-olefins of the exocyclic-delta(3),delta(5)-dihydro-hydroxyphenylpyruvate (ex-H2HPP). This chain is H2HPP isomerase, found in Bacillus subtilis.